A 371-amino-acid chain; its full sequence is Alanine dehydrogenase (371 aa).

Positions 15 and 74 each coordinate substrate. Histidine 95 (proton donor/acceptor) is an active-site residue. NAD(+)-binding positions include serine 133, 177-178, aspartate 197, serine 219, 238-239, 266-269, arginine 279, and 298-301; these read QA, VL, IAID, and VANM. Aspartate 269 functions as the Proton donor/acceptor in the catalytic mechanism.

The protein belongs to the AlaDH/PNT family. In terms of assembly, homohexamer. Trimer of dimer.

It catalyses the reaction L-alanine + NAD(+) + H2O = pyruvate + NH4(+) + NADH + H(+). It participates in amino-acid degradation; L-alanine degradation via dehydrogenase pathway; NH(3) and pyruvate from L-alanine: step 1/1. Functionally, catalyzes the reversible reductive amination of pyruvate to L-alanine. May play a role in cell wall synthesis as L-alanine is an important constituent of the peptidoglycan layer. The chain is Alanine dehydrogenase (ald) from Staphylococcus saprophyticus subsp. saprophyticus (strain ATCC 15305 / DSM 20229 / NCIMB 8711 / NCTC 7292 / S-41).